The chain runs to 234 residues: Segregation and condensation protein A (234 aa).

The protein belongs to the ScpA family. Component of a cohesin-like complex composed of ScpA, ScpB and the Smc homodimer, in which ScpA and ScpB bind to the head domain of Smc. The presence of the three proteins is required for the association of the complex with DNA.

The protein resides in the cytoplasm. In terms of biological role, participates in chromosomal partition during cell division. May act via the formation of a condensin-like complex containing Smc and ScpB that pull DNA away from mid-cell into both cell halves. This chain is Segregation and condensation protein A, found in Streptococcus pyogenes serotype M18 (strain MGAS8232).